We begin with the raw amino-acid sequence, 212 residues long: Ion-translocating oxidoreductase complex subunit G (212 aa).

The chain crosses the membrane as a helical span at residues 9 to 29; that stretch reads ASLLGLFALLCTALVALVNQF. Position 176 is an FMN phosphoryl threonine (Thr-176).

It belongs to the RnfG family. The complex is composed of six subunits: RnfA, RnfB, RnfC, RnfD, RnfE and RnfG. It depends on FMN as a cofactor.

The protein localises to the cell inner membrane. Functionally, part of a membrane-bound complex that couples electron transfer with translocation of ions across the membrane. This is Ion-translocating oxidoreductase complex subunit G from Shewanella loihica (strain ATCC BAA-1088 / PV-4).